Consider the following 145-residue polypeptide: Ribonuclease H (145 aa).

The 142-residue stretch at 2–143 (SKKEVIIYTD…ADSLARKAII (142 aa)) folds into the RNase H type-1 domain. Mg(2+)-binding residues include Asp11, Glu49, Asp71, and Asp135.

Belongs to the RNase H family. As to quaternary structure, monomer. Requires Mg(2+) as cofactor.

Its subcellular location is the cytoplasm. It carries out the reaction Endonucleolytic cleavage to 5'-phosphomonoester.. In terms of biological role, endonuclease that specifically degrades the RNA of RNA-DNA hybrids. This is Ribonuclease H from Wolbachia pipientis wMel.